The chain runs to 318 residues: Taste receptor type 2 member 7 (318 aa).

The Extracellular segment spans residues 1–9 (MTDKVQTTL). A helical membrane pass occupies residues 10-30 (LFLAIGEFSVGILGNAFIGLV). Over 31–55 (NCMDWVKKRKIASIDLILTSLAISR) the chain is Cytoplasmic. The helical transmembrane segment at 56-76 (ICLLCVILLDCFMLVLYPDVY) threads the bilayer. At 77–94 (ATGKQMRIIDFFWTLTNH) the chain is on the extracellular side. The chain crosses the membrane as a helical span at residues 95-115 (LSIWFATCLSIYYFFKIANFF). Over 116 to 128 (HPLFLWMKWRIDR) the chain is Cytoplasmic. The helical transmembrane segment at 129–149 (VISWILLGCMVLSVFINLPAT) threads the bilayer. Residues 150-187 (ENLNADFRRCVKAKRKTNLTWSCRVTKAQHASTKLFLN) lie on the Extracellular side of the membrane. N-linked (GlcNAc...) asparagine glycosylation occurs at Asn-167. A helical transmembrane segment spans residues 188–208 (LVTLLPFSVCLMSFFLLILSL). Residues 209–235 (WRHIRRMQLSATGCRDPSTEAHVRALK) are Cytoplasmic-facing. The helical transmembrane segment at 236–256 (AVISFLLLFIAYYLSFLIATS) threads the bilayer. Residues 257 to 266 (SYFIPETELA) are Extracellular-facing. Residues 267–287 (VIFGEFIALIYPSSHSFILIL) form a helical membrane-spanning segment. Topologically, residues 288–318 (GNSKLRRASLKVLWTVMSILKGRKFQQHKQI) are cytoplasmic.

It belongs to the G-protein coupled receptor T2R family.

The protein localises to the membrane. Its function is as follows. Gustducin-coupled receptor implicated in the perception of bitter compounds in the oral cavity and the gastrointestinal tract. Signals through PLCB2 and the calcium-regulated cation channel TRPM5. This chain is Taste receptor type 2 member 7 (TAS2R7), found in Macaca mulatta (Rhesus macaque).